Reading from the N-terminus, the 776-residue chain is Reticulon-1 (776 aa).

4 disordered regions span residues 1–103 (MAAP…GEGS), 136–168 (ISESPEELGTPGSSLPDVPGIESRGLFSSDSGI), 204–244 (EVKH…EPAP), and 285–580 (LTEI…APPP). Residues 204 to 240 (EVKHQEQNHPELEDKDLDFKNKDTDISIKPEGVREPD) are compositionally biased toward basic and acidic residues. A Phosphoserine modification is found at Ser327. A compositionally biased stretch (low complexity) spans 328 to 341 (PGSITPPSSGTEPS). A phosphoserine mark is found at Ser350, Ser352, and Ser487. Residues 497–511 (AIREETGVRAEERAP) show a composition bias toward basic and acidic residues. Residues 589 to 776 (AIDLLYWRDI…KIPGAKRHAE (188 aa)) enclose the Reticulon domain. Helical transmembrane passes span 603–623 (IVFGSFLLLLFSLTQFSVVSV) and 705–725 (FAVLMWLLTYVGALFNGLTLL).

Interacts with NDRG1. Interacts with BACE1. Interacts with TMEM33. In terms of processing, phosphorylated.

Its subcellular location is the endoplasmic reticulum membrane. The protein localises to the golgi apparatus membrane. Inhibits amyloid precursor protein processing, probably by blocking BACE1 activity. The polypeptide is Reticulon-1 (RTN1) (Pan troglodytes (Chimpanzee)).